The following is a 207-amino-acid chain: N-(5'-phosphoribosyl)anthranilate isomerase (207 aa).

Belongs to the TrpF family.

It catalyses the reaction N-(5-phospho-beta-D-ribosyl)anthranilate = 1-(2-carboxyphenylamino)-1-deoxy-D-ribulose 5-phosphate. The protein operates within amino-acid biosynthesis; L-tryptophan biosynthesis; L-tryptophan from chorismate: step 3/5. This Geotalea daltonii (strain DSM 22248 / JCM 15807 / FRC-32) (Geobacter daltonii) protein is N-(5'-phosphoribosyl)anthranilate isomerase.